Here is a 185-residue protein sequence, read N- to C-terminus: Large ribosomal subunit protein uL5 (185 aa).

The protein belongs to the universal ribosomal protein uL5 family. In terms of assembly, part of the 50S ribosomal subunit; part of the 5S rRNA/L5/L18/L25 subcomplex. Contacts the 5S rRNA and the P site tRNA. Forms a bridge to the 30S subunit in the 70S ribosome.

Its function is as follows. This is one of the proteins that bind and probably mediate the attachment of the 5S RNA into the large ribosomal subunit, where it forms part of the central protuberance. In the 70S ribosome it contacts protein S13 of the 30S subunit (bridge B1b), connecting the 2 subunits; this bridge is implicated in subunit movement. Contacts the P site tRNA; the 5S rRNA and some of its associated proteins might help stabilize positioning of ribosome-bound tRNAs. In Bradyrhizobium diazoefficiens (strain JCM 10833 / BCRC 13528 / IAM 13628 / NBRC 14792 / USDA 110), this protein is Large ribosomal subunit protein uL5.